The following is a 346-amino-acid chain: MSNSINPIVWQEDCVLLVDQTLLPLAYKVVEIKTYQAMAEAIRTMIVRGAPAIGVSAAYGLYLGAKEIQTTDRTIFLEKLEAIAATLRQTRPTAVNLFWAIDRVMATVQGATGNIPELQNLILNTAKAIHNEDLATCQAIGDQGLAVLPETPEKLTILTHCNAGGLATAGYGTALGVIRSAWRENRLGMVYADETRPRLQGSKLTTWECVQEGIPVTQICDNMAAHCMQQGRIDAVVVGADRITANGDAANKIGTYSLAIVAKAHNVPFFVAAPLSTVDFSLSDGKQIPIEERDPKEVYQIGDTRICPEGVQFYNPAFDVTPAHLITAIITEKGAVAPDQLIHLKG.

Substrate-binding positions include 48 to 50, Arg91, and Gln200; that span reads RGA. The active-site Proton donor is Asp241. 251-252 contacts substrate; that stretch reads NK.

It belongs to the eIF-2B alpha/beta/delta subunits family. MtnA subfamily.

It catalyses the reaction 5-(methylsulfanyl)-alpha-D-ribose 1-phosphate = 5-(methylsulfanyl)-D-ribulose 1-phosphate. The protein operates within amino-acid biosynthesis; L-methionine biosynthesis via salvage pathway; L-methionine from S-methyl-5-thio-alpha-D-ribose 1-phosphate: step 1/6. Its function is as follows. Catalyzes the interconversion of methylthioribose-1-phosphate (MTR-1-P) into methylthioribulose-1-phosphate (MTRu-1-P). The sequence is that of Methylthioribose-1-phosphate isomerase from Picosynechococcus sp. (strain ATCC 27264 / PCC 7002 / PR-6) (Agmenellum quadruplicatum).